We begin with the raw amino-acid sequence, 105 residues long: MKRVRRTRSFVVDALCDEVDLSRRHVARVVDSFVSVVTAALERGETVELRDFGVFESRVRKASVGKSIKTGEVVSIPSHCVVVFRPSKRLKSAVRGYRSGEVGAD.

The protein belongs to the bacterial histone-like protein family.

Histone-like DNA-binding protein which is capable of wrapping DNA to stabilize it, and thus to prevent its denaturation under extreme environmental conditions. This is DNA-binding protein HU (hup) from Treponema pallidum (strain Nichols).